The following is an 856-amino-acid chain: DNA mismatch repair protein MutS (856 aa).

623-630 (GPNMSGKS) lines the ATP pocket.

It belongs to the DNA mismatch repair MutS family.

This protein is involved in the repair of mismatches in DNA. It is possible that it carries out the mismatch recognition step. This protein has a weak ATPase activity. This is DNA mismatch repair protein MutS from Natronomonas pharaonis (strain ATCC 35678 / DSM 2160 / CIP 103997 / JCM 8858 / NBRC 14720 / NCIMB 2260 / Gabara) (Halobacterium pharaonis).